We begin with the raw amino-acid sequence, 363 residues long: Flagellar P-ring protein (363 aa).

Positions 1-21 are cleaved as a signal peptide; that stretch reads MKTVINIFILFTFLASLSANA.

It belongs to the FlgI family. As to quaternary structure, the basal body constitutes a major portion of the flagellar organelle and consists of four rings (L,P,S, and M) mounted on a central rod.

The protein localises to the periplasm. It localises to the bacterial flagellum basal body. Assembles around the rod to form the L-ring and probably protects the motor/basal body from shearing forces during rotation. This is Flagellar P-ring protein from Colwellia psychrerythraea (strain 34H / ATCC BAA-681) (Vibrio psychroerythus).